The chain runs to 863 residues: ATP-dependent helicase Lhr-Core protein 2 (863 aa).

Residues phenylalanine 30, glutamine 37, lysine 60, threonine 61, aspartate 179, glutamate 180, arginine 377, and histidine 380 each contribute to the ATP site. One can recognise a Helicase ATP-binding domain in the interval 41-234 (VIEIHKGENV…FVFGFNDDGT (194 aa)). The DEAH box signature appears at 179–182 (DEVH). The 150-residue stretch at 275–424 (RLDELIEQHR…RIKIPQNPLD (150 aa)) folds into the Helicase C-terminal domain. The tract at residues 418 to 512 (IPQNPLDVLV…AIYYMNTGTI (95 aa)) is WH domain. Residues 513 to 863 (PDEAKIEVYT…KIMAMIGELE (351 aa)) are domain 4.

This sequence belongs to the Lhr helicase family. Lhr-Core subfamily. As to quaternary structure, monomer.

It carries out the reaction ATP + H2O = ADP + phosphate + H(+). Unwinding of dsRNA duplexes is inhibited by AMP-PMP and ATP-gamma-S. Functionally, a DNA:RNA helicase with a significant strand annealing activity, probably involved in DNA repair and RNA transactions. In vitro has a slow helicase activity with a preference for 3'-overhang duplexes; displaces RNA from 3'-overhang DNA:RNA or RNA:RNA duplexes. 3'-tailed double-stranded (ds)DNA is not unwound. The slow helicase activity on RNA duplexes is ATP-independent. Has strand annealing properties in the absence of ATP; forms 3'-overhang DNA:RNA, 3'-overhang dsRNA and 3'-overhang dsDNA duplexes but not 5'-overhang duplexes. A nucleic acid-dependent ATPase; single-stranded (ss)DNA and RNA are equally stimulatory. Binds ssDNA, RNA, dsDNA and dsRNA duplexes. The sequence is that of ATP-dependent helicase Lhr-Core protein 2 from Thermococcus barophilus (strain DSM 11836 / MP).